The following is a 262-amino-acid chain: Transmembrane protein 270 (262 aa).

A run of 5 helical transmembrane segments spans residues 6–26 (LVRS…ALLI), 30–50 (AHLY…LLGL), 67–87 (PVGR…CLAL), 92–112 (LVWA…KWLG), and 127–147 (LFLS…LLVW). Residues 226-262 (QEAEPQKALGLSSETPPPGPPAPGARPVLPEPGTPGE) form a disordered region. A compositionally biased stretch (pro residues) spans 240–262 (TPPPGPPAPGARPVLPEPGTPGE).

The protein localises to the membrane. The chain is Transmembrane protein 270 from Bos taurus (Bovine).